We begin with the raw amino-acid sequence, 27 residues long: Conotoxin flf14a (27 aa).

Cystine bridges form between cysteine 6/cysteine 26 and cysteine 10/cysteine 22.

Expressed by the venom duct.

Its subcellular location is the secreted. This is Conotoxin flf14a from Conus anabathrum floridanus (Florida cone).